We begin with the raw amino-acid sequence, 315 residues long: DNA-directed RNA polymerase subunit alpha (315 aa).

The alpha N-terminal domain (alpha-NTD) stretch occupies residues 1 to 228; it reads MLEIEKPKIE…EHFKLFMTLT (228 aa). The tract at residues 245-315 is alpha C-terminal domain (alpha-CTD); sequence KEKVLEMTIE…LGLGLRKSED (71 aa).

The protein belongs to the RNA polymerase alpha chain family. Homodimer. The RNAP catalytic core consists of 2 alpha, 1 beta, 1 beta' and 1 omega subunit. When a sigma factor is associated with the core the holoenzyme is formed, which can initiate transcription.

The catalysed reaction is RNA(n) + a ribonucleoside 5'-triphosphate = RNA(n+1) + diphosphate. Functionally, DNA-dependent RNA polymerase catalyzes the transcription of DNA into RNA using the four ribonucleoside triphosphates as substrates. In Clostridium botulinum (strain Langeland / NCTC 10281 / Type F), this protein is DNA-directed RNA polymerase subunit alpha.